The following is a 613-amino-acid chain: Zinc metalloproteinase-disintegrin-like MTP4 (613 aa).

The first 20 residues, 1–20 (MIEVLLVTICFTVFPYQGSS), serve as a signal peptide directing secretion. The propeptide occupies 21–191 (IILESGNVND…DEPIEKISQL (171 aa)). Residues 205-401 (KYIELYVVVD…VRPQCILNKP (197 aa)) enclose the Peptidase M12B domain. Residue glutamate 208 coordinates Ca(2+). Asparagine 282 carries an N-linked (GlcNAc...) asparagine glycan. Aspartate 292 provides a ligand contact to Ca(2+). Disulfide bonds link cysteine 316/cysteine 396, cysteine 356/cysteine 380, and cysteine 358/cysteine 363. Zn(2+) is bound by residues histidine 341, histidine 345, and histidine 351. The Ca(2+) site is built by cysteine 396, asparagine 399, asparagine 414, phenylalanine 416, glutamate 418, glutamate 421, and aspartate 424. One can recognise a Disintegrin domain in the interval 409–495 (PPVCGNYFVE…KCPTDSFQRN (87 aa)). 15 disulfide bridges follow: cysteine 412/cysteine 441, cysteine 423/cysteine 436, cysteine 425/cysteine 431, cysteine 435/cysteine 458, cysteine 449/cysteine 455, cysteine 454/cysteine 480, cysteine 467/cysteine 487, cysteine 474/cysteine 506, cysteine 499/cysteine 511, cysteine 518/cysteine 568, cysteine 533/cysteine 575, cysteine 543/cysteine 577, cysteine 546/cysteine 556, cysteine 563/cysteine 601, and cysteine 595/cysteine 606. Asparagine 437 is a glycosylation site (N-linked (GlcNAc...) asparagine). The short motif at 473-475 (DCD) is the D/ECD-tripeptide element. Positions 475, 476, 478, and 490 each coordinate Ca(2+). A hypervariable region that may play important roles toward cell migration region spans residues 561–574 (KMCGKLLCEKGNAT). Asparagine 572 carries an N-linked (GlcNAc...) asparagine glycan.

The protein belongs to the venom metalloproteinase (M12B) family. P-III subfamily. In terms of assembly, monomer. The cofactor is Zn(2+). In terms of tissue distribution, expressed by the venom gland.

The protein localises to the secreted. Its function is as follows. Snake venom zinc metalloproteinase that may impair hemostasis in the prey. The polypeptide is Zinc metalloproteinase-disintegrin-like MTP4 (Drysdalia coronoides (White-lipped snake)).